Consider the following 356-residue polypeptide: UDP-N-acetylglucosamine--N-acetylmuramyl-(pentapeptide) pyrophosphoryl-undecaprenol N-acetylglucosamine transferase (356 aa).

Residues 14–16 (TGG), Asn-126, Arg-162, Ser-190, Ile-244, and Gln-289 each bind UDP-N-acetyl-alpha-D-glucosamine.

Belongs to the glycosyltransferase 28 family. MurG subfamily.

The protein localises to the cell inner membrane. It carries out the reaction di-trans,octa-cis-undecaprenyl diphospho-N-acetyl-alpha-D-muramoyl-L-alanyl-D-glutamyl-meso-2,6-diaminopimeloyl-D-alanyl-D-alanine + UDP-N-acetyl-alpha-D-glucosamine = di-trans,octa-cis-undecaprenyl diphospho-[N-acetyl-alpha-D-glucosaminyl-(1-&gt;4)]-N-acetyl-alpha-D-muramoyl-L-alanyl-D-glutamyl-meso-2,6-diaminopimeloyl-D-alanyl-D-alanine + UDP + H(+). It functions in the pathway cell wall biogenesis; peptidoglycan biosynthesis. Cell wall formation. Catalyzes the transfer of a GlcNAc subunit on undecaprenyl-pyrophosphoryl-MurNAc-pentapeptide (lipid intermediate I) to form undecaprenyl-pyrophosphoryl-MurNAc-(pentapeptide)GlcNAc (lipid intermediate II). This is UDP-N-acetylglucosamine--N-acetylmuramyl-(pentapeptide) pyrophosphoryl-undecaprenol N-acetylglucosamine transferase from Cupriavidus pinatubonensis (strain JMP 134 / LMG 1197) (Cupriavidus necator (strain JMP 134)).